The following is a 354-amino-acid chain: Selenide, water dikinase (354 aa).

U21 is a catalytic residue. Position 21 (U21) is a non-standard amino acid, selenocysteine. ATP-binding positions include K24 and 51–53 (TSD). Residue D54 coordinates Mg(2+). ATP-binding positions include D71, D94, and 141-143 (GHT). Position 94 (D94) interacts with Mg(2+). D229 serves as a coordination point for Mg(2+).

Belongs to the selenophosphate synthase 1 family. Class I subfamily. Homodimer. Mg(2+) serves as cofactor.

The catalysed reaction is hydrogenselenide + ATP + H2O = selenophosphate + AMP + phosphate + 2 H(+). Its function is as follows. Synthesizes selenophosphate from selenide and ATP. The protein is Selenide, water dikinase of Treponema denticola (strain ATCC 35405 / DSM 14222 / CIP 103919 / JCM 8153 / KCTC 15104).